The chain runs to 332 residues: Probable class II chitinase ARB_00204 (332 aa).

The signal sequence occupies residues 1-18 (MKTPFTILAALTVATTLA). The region spanning 19-331 (DVPDEWDIIE…NPHRKYLDSF (313 aa)) is the GH18 domain. The active-site Proton donor is the Glu-118. Asn-245 is a glycosylation site (N-linked (GlcNAc...) asparagine).

This sequence belongs to the glycosyl hydrolase 18 family. Chitinase class II subfamily.

The protein resides in the secreted. The catalysed reaction is Random endo-hydrolysis of N-acetyl-beta-D-glucosaminide (1-&gt;4)-beta-linkages in chitin and chitodextrins.. Degrades chitin and chitotriose. This Arthroderma benhamiae (strain ATCC MYA-4681 / CBS 112371) (Trichophyton mentagrophytes) protein is Probable class II chitinase ARB_00204.